We begin with the raw amino-acid sequence, 133 residues long: Large ribosomal subunit protein bL17 (133 aa).

It belongs to the bacterial ribosomal protein bL17 family. Part of the 50S ribosomal subunit. Contacts protein L32.

In Polaromonas naphthalenivorans (strain CJ2), this protein is Large ribosomal subunit protein bL17.